The sequence spans 1058 residues: Carbamoyl phosphate synthase large chain (1058 aa).

The tract at residues 1-401 (MPKRKDIQKI…SLLKACRSLE (401 aa)) is carboxyphosphate synthetic domain. 12 residues coordinate ATP: Arg-129, Arg-169, Gly-175, Gly-176, Arg-208, Ile-210, Glu-215, Gly-241, Ile-242, His-243, Gln-284, and Glu-298. One can recognise an ATP-grasp 1 domain in the interval 133–327 (KQLMQELDQP…IAKLAAKIAV (195 aa)). Gln-284, Glu-298, and Asn-300 together coordinate Mg(2+). Gln-284, Glu-298, and Asn-300 together coordinate Mn(2+). The oligomerization domain stretch occupies residues 402-546 (IGVCHNEMTS…YSTYELENES (145 aa)). Residues 547–929 (VQSNKESILV…ALYKAFEANN (383 aa)) are carbamoyl phosphate synthetic domain. The 191-residue stretch at 671 to 861 (EKALKELGIP…MAQIATKLIL (191 aa)) folds into the ATP-grasp 2 domain. Residues Arg-707, Ser-746, Ile-748, Glu-752, Gly-777, Val-778, His-779, Ser-780, Gln-820, and Glu-832 each contribute to the ATP site. Gln-820, Glu-832, and Asn-834 together coordinate Mg(2+). Mn(2+) contacts are provided by Gln-820, Glu-832, and Asn-834. In terms of domain architecture, MGS-like spans 930 to 1058 (SHLSEFGQIV…ESRCFNIEAI (129 aa)). An allosteric domain region spans residues 930-1058 (SHLSEFGQIV…ESRCFNIEAI (129 aa)).

It belongs to the CarB family. Composed of two chains; the small (or glutamine) chain promotes the hydrolysis of glutamine to ammonia, which is used by the large (or ammonia) chain to synthesize carbamoyl phosphate. Tetramer of heterodimers (alpha,beta)4. Mg(2+) is required as a cofactor. Mn(2+) serves as cofactor.

It carries out the reaction hydrogencarbonate + L-glutamine + 2 ATP + H2O = carbamoyl phosphate + L-glutamate + 2 ADP + phosphate + 2 H(+). The enzyme catalyses hydrogencarbonate + NH4(+) + 2 ATP = carbamoyl phosphate + 2 ADP + phosphate + 2 H(+). It functions in the pathway amino-acid biosynthesis; L-arginine biosynthesis; carbamoyl phosphate from bicarbonate: step 1/1. Its pathway is pyrimidine metabolism; UMP biosynthesis via de novo pathway; (S)-dihydroorotate from bicarbonate: step 1/3. Functionally, large subunit of the glutamine-dependent carbamoyl phosphate synthetase (CPSase). CPSase catalyzes the formation of carbamoyl phosphate from the ammonia moiety of glutamine, carbonate, and phosphate donated by ATP, constituting the first step of 2 biosynthetic pathways, one leading to arginine and/or urea and the other to pyrimidine nucleotides. The large subunit (synthetase) binds the substrates ammonia (free or transferred from glutamine from the small subunit), hydrogencarbonate and ATP and carries out an ATP-coupled ligase reaction, activating hydrogencarbonate by forming carboxy phosphate which reacts with ammonia to form carbamoyl phosphate. This Streptococcus pyogenes serotype M49 (strain NZ131) protein is Carbamoyl phosphate synthase large chain.